Reading from the N-terminus, the 1166-residue chain is Calcium-activated potassium channel subunit alpha-1 (1166 aa).

The span at 1-15 (MANGGGGGGGGGGGS) shows a compositional bias: gly residues. 2 disordered regions span residues 1 to 20 (MANG…LRMS) and 30 to 51 (LDAS…SVHE). Over 1–74 (MANGGGGGGG…VPCDSRGQRM (74 aa)) the chain is Extracellular. The span at 33–48 (SSSSSSSSSSSSSSSS) shows a compositional bias: low complexity. Residues 75-95 (WWAFLASSMVTFFGGLFIILL) form a helical membrane-spanning segment. Residues 96 to 166 (WRTLKYLWTV…MISAQTLTGR (71 aa)) lie on the Cytoplasmic side of the membrane. S-palmitoyl cysteine attachment occurs at residues Cys106, Cys107, and Cys109. Thr139 carries the phosphothreonine; by CamK2 modification. Residues 167-187 (VLVVLVFALSIGALVIYFIDS) form a helical membrane-spanning segment. Over 188 to 202 (SNPIESCQNFYKDFT) the chain is Extracellular. Residues 203–223 (LQIDMAFNVFFLLYFGLRFIA) traverse the membrane as a helical segment. Over 224–227 (ANDK) the chain is Cytoplasmic. The helical transmembrane segment at 228–248 (LWFWLEVNSVVDFFTVPPVFV) threads the bilayer. Residues 249–252 (SVYL) are Extracellular-facing. Residues 253–273 (NRSWLGLRFLRALRLIQFSEI) form a helical; Voltage-sensor membrane-spanning segment. Topologically, residues 274–288 (LQFLNILKTSNSIKL) are cytoplasmic. Residues 289-309 (VNLLSIFISTWLTAAGFIHLV) form a helical membrane-spanning segment. Topologically, residues 310–323 (ENSGDPWENFQNNQ) are extracellular. Positions 324 to 346 (ALTYWECVYLLMVTMSTVGYGDV) form an intramembrane region, pore-forming. The Selectivity for potassium signature appears at 340 to 343 (TVGY). Topologically, residues 347–355 (YAKTTLGRL) are extracellular. Residues 356–376 (FMVFFILGGLAMFASYVPEII) form a helical membrane-spanning segment. At 377 to 1166 (ELIGNRKKYG…KQKYVQEERL (790 aa)) the chain is on the cytoplasmic side. The RCK N-terminal 1 domain maps to 395 to 537 (RKHIVVCGHI…WNWKEGDDAI (143 aa)). Mg(2+) is bound by residues Glu427, Gln450, and Glu452. The interval 544-564 (LGFIAQSCLAQGLSTMLANLF) is segment S7. The tract at residues 601 to 621 (LSFPTVCELCFVKLKLLMIAI) is segment S8. Positions 665–669 (CKACH) are heme-binding motif. The disordered stretch occupies residues 689–717 (EQPSTLSPKKKQRNGGMRNSPSSSPKLMR). Position 693 is a phosphothreonine (Thr693). Phosphoserine occurs at positions 695, 708, and 712. The tract at residues 767 to 787 (VLSGHVVVCIFGDVSSALIGL) is segment S9. The 145-residue stretch at 769–913 (SGHVVVCIFG…MDRSSPDNSP (145 aa)) folds into the RCK N-terminal 2 domain. A Phosphothreonine modification is found at Thr900. Phosphoserine occurs at positions 908 and 912. The Calcium bowl signature appears at 933–955 (TELVNDTNVQFLDQDDDDDPDTE). Positions 942, 945, 948, and 950 each coordinate Ca(2+). The segment S10 stretch occupies residues 962–982 (FACGTAFAVSVLDSLMSATYF). Low complexity predominate over residues 1116 to 1141 (RASLSHSSHSSQSSSKKSSSVHSIPS). The disordered stretch occupies residues 1116-1166 (RASLSHSSHSSQSSSKKSSSVHSIPSTANRQNRPKSRESRDKQKYVQEERL). Residues 1150–1166 (KSRESRDKQKYVQEERL) are compositionally biased toward basic and acidic residues. Phosphoserine; by PKG occurs at positions 1151 and 1154.

It belongs to the potassium channel family. Calcium-activated (TC 1.A.1.3) subfamily. KCa1.1/KCNMA1 sub-subfamily. As to quaternary structure, homotetramer; which constitutes the calcium-activated potassium channel. Interacts with beta subunits KCNMB1, KCNMB2, KCNMB3 and KCNMB4. Interacts with gamma subunits LRRC26, LRRC38, LRRC52 and LRRC55. Beta and gamma subunits are accessory, and modulate its activity. Interacts with RAB11B. In terms of processing, phosphorylated. Stimulated by PKG, but not by PKA. In smooth muscles, phosphorylation affects its activity. Phosphorylated. Exclusively stimulated by PKA. In smooth muscles, phosphorylation affects its activity. Post-translationally, incremental phosphorylation of Thr-139 of the KCNMA1 tetramer changes the response to ethanol from increased activation to inhibition of channel activity. In terms of processing, palmitoylation by ZDHHC22 and ZDHHC23 within the intracellular linker between the S0 and S1 transmembrane domains regulates localization to the plasma membrane. Depalmitoylated by LYPLA1 and LYPLAL1, leading to retard exit from the trans-Golgi network.

Its subcellular location is the cell membrane. The catalysed reaction is K(+)(in) = K(+)(out). With respect to regulation, ethanol and carbon monoxide-bound heme increase channel activation. Heme inhibits channel activation. Phosphorylation of Thr-139 leads to inhibition of channel activity by ethanol. Functionally, potassium channel activated by both membrane depolarization or increase in cytosolic Ca(2+) that mediates export of K(+). It is also activated by concentration of cytosolic Mg(2+). Its activation dampens the excitatory events that elevate the cytosolic Ca(2+) concentration and/or depolarize the cell membrane. It therefore contributes to repolarization of the membrane potential. Plays a key role in controlling excitability in a number of systems, such as regulation of the contraction of smooth muscle, the tuning of hair cells in the cochlea, regulation of transmitter release, and innate immunity. In smooth muscles, its activation by high level of Ca(2+), caused by ryanodine receptors in the sarcoplasmic reticulum, regulates the membrane potential. In cochlea cells, its number and kinetic properties partly determine the characteristic frequency of each hair cell and thereby helps to establish a tonotopic map. Kinetics of KCNMA1 channels are determined by alternative splicing, phosphorylation status and its combination with modulating beta subunits. Highly sensitive to both iberiotoxin (IbTx) and charybdotoxin (CTX). This Bos taurus (Bovine) protein is Calcium-activated potassium channel subunit alpha-1 (KCNMA1).